Consider the following 431-residue polypeptide: Nuclear receptor subfamily 1 group I member 2 (431 aa).

Positions 35-104 form a DNA-binding region, nuclear receptor; that stretch reads LQICRVCGDK…RLRKCLESGM (70 aa). 2 NR C4-type zinc fingers span residues 38–58 and 74–99; these read CRVC…CEGC and CPFR…LRKC. Residues 63–89 carry the Bipartite nuclear localization signal motif; sequence RRAMKRNVRLRCPFRKGTCEITRKTRR. The segment at 105 to 142 is hinge; it reads KKEMIMSDAAVEQRRALIKRKKREKIEAPPPGGQGLTE. Residues 143–430 form the NR LBD domain; it reads EQQALIQELM…LMQELFSSTD (288 aa). Hyperforin-binding positions include S244 and 282–285; that span reads ILRF.

The protein belongs to the nuclear hormone receptor family. NR1 subfamily. Heterodimer with RXRA. Interacts with NCOA1. Interacts (via domain NR LBD) with CRY1 and CRY2 in a ligand-dependent manner.

The protein resides in the nucleus. Functionally, nuclear receptor that binds and is activated by a variety of endogenous and xenobiotic compounds. Transcription factor that activates the transcription of multiple genes involved in the metabolism and secretion of potentially harmful xenobiotics, endogenous compounds and drugs. Response to specific ligands is species-specific, due to differences in the ligand-binding domain. Binds to a response element in the promoters of the CYP3A4 and ABCB1/MDR1 genes. Activated by naturally occurring steroids such as pregnenolone and progesterone, the cholesterol metabolite 5-beta-cholestane-3-alpha,7-alpha,12-alpha-triol, synthetic glucocorticoids and antiglucocorticoids and 16-alpha-carbonitrile (PCN). This is Nuclear receptor subfamily 1 group I member 2 (Nr1i2) from Mus musculus (Mouse).